The following is a 342-amino-acid chain: Protein FinQ (342 aa).

A DNA-binding region (H-T-H motif) is located at residues 208–227 (RDREFNLLNAQISMVLYICS).

Transcriptional inhibitor of the F plasmid transfer genes. FinQ may regulate a gene or genes encoded on the IncI plasmids, and coincidentally may inhibit F transfer when coresident. This is Protein FinQ (finQ) from Escherichia coli.